Consider the following 286-residue polypeptide: Bifunctional protein FolD (286 aa).

NADP(+)-binding positions include 167–169 (GRS) and I233.

The protein belongs to the tetrahydrofolate dehydrogenase/cyclohydrolase family. Homodimer.

It carries out the reaction (6R)-5,10-methylene-5,6,7,8-tetrahydrofolate + NADP(+) = (6R)-5,10-methenyltetrahydrofolate + NADPH. The catalysed reaction is (6R)-5,10-methenyltetrahydrofolate + H2O = (6R)-10-formyltetrahydrofolate + H(+). The protein operates within one-carbon metabolism; tetrahydrofolate interconversion. Its function is as follows. Catalyzes the oxidation of 5,10-methylenetetrahydrofolate to 5,10-methenyltetrahydrofolate and then the hydrolysis of 5,10-methenyltetrahydrofolate to 10-formyltetrahydrofolate. The protein is Bifunctional protein FolD of Limosilactobacillus reuteri (strain DSM 20016) (Lactobacillus reuteri).